Consider the following 304-residue polypeptide: tRNA dimethylallyltransferase (304 aa).

16–23 (GPTASGKS) is a binding site for ATP. 18-23 (TASGKS) contacts substrate. Interaction with substrate tRNA stretches follow at residues 41 to 44 (DSMQ) and 165 to 169 (QRIIR).

Belongs to the IPP transferase family. In terms of assembly, monomer. Mg(2+) is required as a cofactor.

The enzyme catalyses adenosine(37) in tRNA + dimethylallyl diphosphate = N(6)-dimethylallyladenosine(37) in tRNA + diphosphate. In terms of biological role, catalyzes the transfer of a dimethylallyl group onto the adenine at position 37 in tRNAs that read codons beginning with uridine, leading to the formation of N6-(dimethylallyl)adenosine (i(6)A). This chain is tRNA dimethylallyltransferase, found in Allorhizobium ampelinum (strain ATCC BAA-846 / DSM 112012 / S4) (Agrobacterium vitis (strain S4)).